A 373-amino-acid polypeptide reads, in one-letter code: Packaging protein 3 (373 aa).

Residues 1–32 are disordered; the sequence is MHPVLRQMRPQPRATTASAAVALSGSGEQEEP. Residues 1-150 are interaction with packaging protein 1; the sequence is MHPVLRQMRP…VTEERNFQKS (150 aa). Serine 52 and serine 334 each carry phosphoserine; by host.

It belongs to the adenoviridae packaging protein 3 family. As to quaternary structure, part of the genome packaging complex composed of packaging proteins 1, 2 and 3; this complex specifically binds to the packaging sequence on the left end of viral genomic DNA and performs packaging of the viral genome. Interacts with hexon-linking protein IIIa; this interaction is required to promote correct genome packaging. Cleaved at different sites by the viral protease during virion maturation.

Its subcellular location is the host nucleus. Functionally, involved in viral genome packaging through its interaction with packaging proteins 1 and 2. After proteolytic cleavage by adenovirus protease, L1 52/55k protein is removed from the capsid during viral maturation. This Homo sapiens (Human) protein is Packaging protein 3.